The sequence spans 38 residues: MNLKKYLSTAPVVATLWLFLTAGILIELNRFFPDSLFY.

A helical transmembrane segment spans residues 6 to 26; sequence YLSTAPVVATLWLFLTAGILI.

This sequence belongs to the PsaJ family.

It localises to the plastid. The protein localises to the chloroplast thylakoid membrane. Its function is as follows. May help in the organization of the PsaE and PsaF subunits. In Cyanidioschyzon merolae (strain NIES-3377 / 10D) (Unicellular red alga), this protein is Photosystem I reaction center subunit IX.